We begin with the raw amino-acid sequence, 905 residues long: Coatomer subunit beta' (905 aa).

WD repeat units lie at residues 13–52 (ARSD…LVKT), 55–94 (VCDL…RVHM), 97–136 (AHSD…SCSQ), 140–180 (GHTH…PNFT), 183–224 (GHEK…CVQT), 227–266 (GHAQ…LEST), 350–388 (SCEI…NKSF), and 390–425 (SAQE…KSFK). The residue at position 627 (Lys627) is an N6-acetyllysine. The WD 9 repeat unit spans residues 746-783 (IRTGRLPEAAFLARTYLPSQVSRVVKLWRENLSKVNQK). The disordered stretch occupies residues 837–873 (EEAKGFQPSRPTAQQEPDGKPASSPVIMASQTTHKEE). Ser859 carries the phosphoserine modification. Positions 867 to 891 (QTTHKEEKSLLELEVDLDNLELEDI) form a coiled coil.

It belongs to the WD repeat COPB2 family. As to quaternary structure, oligomeric complex that consists of at least the alpha, beta, beta', gamma, delta, epsilon and zeta subunits. Probably interacts with PEX11A. Interacts with SCYL1. Interacts with JAGN1.

Its subcellular location is the cytoplasm. The protein resides in the cytosol. The protein localises to the golgi apparatus membrane. It is found in the cytoplasmic vesicle. It localises to the COPI-coated vesicle membrane. Functionally, the coatomer is a cytosolic protein complex that binds to dilysine motifs and reversibly associates with Golgi non-clathrin-coated vesicles, which further mediate biosynthetic protein transport from the ER, via the Golgi up to the trans Golgi network. Coatomer complex is required for budding from Golgi membranes, and is essential for the retrograde Golgi-to-ER transport of dilysine-tagged proteins. In mammals, the coatomer can only be recruited by membranes associated to ADP-ribosylation factors (ARFs), which are small GTP-binding proteins; the complex also influences the Golgi structural integrity, as well as the processing, activity, and endocytic recycling of LDL receptors. This coatomer complex protein, essential for Golgi budding and vesicular trafficking, is a selective binding protein (RACK) for protein kinase C, epsilon type. It binds to Golgi membranes in a GTP-dependent manner. In Mus musculus (Mouse), this protein is Coatomer subunit beta' (Copb2).